The following is a 599-amino-acid chain: MSSLSCPTYRSRTSSSSPFLSNHHHSSLINVVDPRRSLSFHYASPQGLNLAELCVVRSQRRSVQSSVVVQDGSVATESSSSEEAKDVGVLTIPSLEADKVVAESDGGEQLSTVSITVVGASGDLAKKKIFPALFALYYEGCLPEHFTIFGYARSKMTDAELRVMVSKTLTCRIDKRANCGEKMEEFLKRCFYHSGQYDSQEHFVALDEKLKEHEGGRLSNRLFYLSIPPNIFVDAVKCASSSASSVNGWTRVIVEKPFGRDSKTSAALTKSLKQYLEEDQIFRIDHYLGKELVENLSVLRFSNLIFEPLWSRQYIRNVQFIFSEDFGTEGRGGYFDNYGIIRDIMQNHLLQILALFAMETPVSLDAEDIRNEKVKVLRSMRPIKLEDVVIGQYKSHSIGGVTYPSYTDDKTVPKGSLTPTFAAAALFIDNARWDGVPFLMKAGKALNTRSAEIRVQFRHVPGNLYNRNSGTDRDQTTNELVIRVQPDEAIYLKINNKVPGLGMRLDQSNLNLLYSARYSKEIPDAYERLLLDAIEGERRLFIRSDELDAAWALFTPLLKEIEEKKTTPEFYPYGSRGPVGAHYLAAKHKVQWGDLSLDQ.

The segment covering 1–18 (MSSLSCPTYRSRTSSSSP) has biased composition (low complexity). Residues 1–23 (MSSLSCPTYRSRTSSSSPFLSNH) form a disordered region. A chloroplast-targeting transit peptide spans 1–66 (MSSLSCPTYR…RSQRRSVQSS (66 aa)). Val-67 carries the post-translational modification N-acetylvaline. Residues 119 to 126 (GASGDLAK) and Arg-153 each bind NADP(+). Cys-171 and Cys-179 are oxidised to a cystine. Position 256 (Lys-256) interacts with NADP(+). Residues Lys-256, 286 to 290 (HYLGK), Glu-324, and Asp-343 each bind D-glucose 6-phosphate. The active-site Proton acceptor is His-348. Residue Lys-441 participates in NADP(+) binding. Positions 444 and 449 each coordinate D-glucose 6-phosphate. The NADP(+) site is built by Arg-454 and Arg-483. Residue Gln-485 participates in D-glucose 6-phosphate binding. NADP(+) contacts are provided by residues 491 to 493 (YLK) and Arg-576.

It belongs to the glucose-6-phosphate dehydrogenase family. In terms of assembly, forms homodimer. Interacts with G6PD1. As to expression, expressed in roots, flowers and siliques.

It localises to the plastid. It is found in the chloroplast stroma. The enzyme catalyses D-glucose 6-phosphate + NADP(+) = 6-phospho-D-glucono-1,5-lactone + NADPH + H(+). Its pathway is carbohydrate degradation; pentose phosphate pathway; D-ribulose 5-phosphate from D-glucose 6-phosphate (oxidative stage): step 1/3. Regulated by metabolites. Post-translationally inactivated by cysteine-mediated redox modification via the ferredoxin-thioredoxin system in the light and this avoids futile cycles with photosynthetic CO2 fixation. In terms of biological role, catalyzes the rate-limiting step of the oxidative pentose-phosphate pathway, which represents a route for the dissimilation of carbohydrates besides glycolysis. The main function of this enzyme is to provide reducing power (NADPH) and pentose phosphates for fatty acid and nucleic acid synthesis which are involved in membrane synthesis and cell division. The polypeptide is Glucose-6-phosphate 1-dehydrogenase 3, chloroplastic (Arabidopsis thaliana (Mouse-ear cress)).